The primary structure comprises 394 residues: Protein maelstrom (394 aa).

Positions 2–69 (APKKQNGFMM…ARRDKRGSLN (68 aa)) form a DNA-binding region, HMG box. The tract at residues 44 to 93 (TQQRGPYNSDAKDANAARRDKRGSLNGHGQVDKAQREAAESLMDKAQREA) is disordered. Residues 73–93 (QVDKAQREAAESLMDKAQREA) show a composition bias toward basic and acidic residues.

Belongs to the maelstrom family.

It localises to the cytoplasm. Its subcellular location is the nucleus. In terms of biological role, involved both in the piRNA and miRNA metabolic processes. As a component of the meiotic nuage, plays a central role during oogenesis by repressing transposable elements and preventing their mobilization, which is essential for the germline integrity. Repression of transposable elements is mediated via the piRNA metabolic process, which mediates the repression of transposable elements during meiosis by forming complexes composed of piRNAs and Piwi proteins and governs the repression of transposons. As a nuclear component, it is required for proper differentiation in the germline stem cell (GSC) lineage by repressing microRNA-7 (miR-7), thereby acting as an indirect regulator of bag-of-marbles (Bam). Acts by binding to the promoter of miR-7 gene and repressing its expression; miR-7 repression alleviates the Bam repression by miR-7, thereby allowing differentiation in the germline stem cell (GSC) lineage. The chain is Protein maelstrom (mael) from Drosophila simulans (Fruit fly).